The sequence spans 357 residues: Hypersensitivity response secretion protein HrcU (357 aa).

The disordered stretch occupies residues 1-21 (MSDEKTEQPTDKKLEDAHRDG). 5 helical membrane-spanning segments follow: residues 29-49 (LTAAAVLLSGCLLLALTASVF), 84-104 (LVLMTLPVGFVFALVAWIATW), 149-169 (VAVAAAVWKLILILMPSIVGA), 180-200 (IGMTLLVRLLAAGGGLFLILG), and 323-343 (LYGPVPEPLFETVAEVLAWVG).

Belongs to the type III secretion exporter family.

Its subcellular location is the cell membrane. Involved in the secretion of PopA, a proteinaceous elicitor of the hypersensitivity response in plants. This is Hypersensitivity response secretion protein HrcU (hrcU) from Ralstonia nicotianae (strain ATCC BAA-1114 / GMI1000) (Ralstonia solanacearum).